Consider the following 310-residue polypeptide: Putative S-adenosyl-L-methionine-dependent methyltransferase Mb0151 (310 aa).

Residues aspartate 132 and 161-162 (DL) contribute to the S-adenosyl-L-methionine site.

This sequence belongs to the UPF0677 family.

Exhibits S-adenosyl-L-methionine-dependent methyltransferase activity. This is Putative S-adenosyl-L-methionine-dependent methyltransferase Mb0151 from Mycobacterium bovis (strain ATCC BAA-935 / AF2122/97).